The primary structure comprises 103 residues: Small ribosomal subunit protein uS10 (103 aa).

This sequence belongs to the universal ribosomal protein uS10 family. Part of the 30S ribosomal subunit.

Functionally, involved in the binding of tRNA to the ribosomes. This chain is Small ribosomal subunit protein uS10, found in Psychromonas ingrahamii (strain DSM 17664 / CCUG 51855 / 37).